The following is a 483-amino-acid chain: Zinc metalloproteinase/disintegrin (483 aa).

An N-terminal signal peptide occupies residues 1–20; the sequence is MIQVLLVTVCLAVFPYQGSS. Residues 21–190 constitute a propeptide that is removed on maturation; that stretch reads IILESGNVND…KASQLYLTPE (170 aa). One can recognise a Peptidase M12B domain in the interval 197–395; the sequence is RYVKLAIVVD…YKPQCILNAP (199 aa). 3 disulfides stabilise this stretch: Cys-308–Cys-390, Cys-352–Cys-374, and Cys-354–Cys-357. His-333 is a Zn(2+) binding site. Residue Glu-334 is part of the active site. Zn(2+)-binding residues include His-337 and His-343. Positions 396-411 are excised as a propeptide; the sequence is LRTDTVSTPVSGNELL. Positions 403-483 constitute a Disintegrin domain; that stretch reads TPVSGNELLE…SDDCPRWNDL (81 aa). Intrachain disulfides connect Cys-417–Cys-432, Cys-419–Cys-427, Cys-426–Cys-449, Cys-440–Cys-446, Cys-445–Cys-470, and Cys-458–Cys-477. Residues 462–464 carry the Cell attachment site motif; sequence RGD.

It belongs to the venom metalloproteinase (M12B) family. P-II subfamily. P-IIa sub-subfamily. As to quaternary structure, monomer. The cofactor is Zn(2+). In terms of tissue distribution, expressed by the venom gland.

It localises to the secreted. Functionally, impairs hemostasis in the envenomed animal. Its function is as follows. Inhibits ADP- and collagen-induced human platelet aggregation with IC(50) of 123 and 135 nM, respectively. Inhibits sperm-egg binding in a concentration-dependent manner, but has no effect on the fusion of sperm-egg. This Protobothrops jerdonii (Jerdon's pitviper) protein is Zinc metalloproteinase/disintegrin.